Reading from the N-terminus, the 177-residue chain is Ribulose bisphosphate carboxylase small subunit, chloroplastic 6 (177 aa).

The N-terminal 56 residues, 1–56 (MASSMMASTAAVARVGPAQTNMVAPFNGLRSSVAFPATRKANNDLSTLPSNGGRVS), are a transit peptide targeting the chloroplast.

Belongs to the RuBisCO small chain family. As to quaternary structure, heterohexadecamer of 8 large and 8 small subunits.

Its subcellular location is the plastid. It localises to the chloroplast. In terms of biological role, ruBisCO catalyzes two reactions: the carboxylation of D-ribulose 1,5-bisphosphate, the primary event in carbon dioxide fixation, as well as the oxidative fragmentation of the pentose substrate. Both reactions occur simultaneously and in competition at the same active site. Although the small subunit is not catalytic it is essential for maximal activity. The chain is Ribulose bisphosphate carboxylase small subunit, chloroplastic 6 from Lemna gibba (Swollen duckweed).